The sequence spans 485 residues: NADH-quinone oxidoreductase subunit N (485 aa).

Helical transmembrane passes span 8 to 28 (LIALLPLLIVGLTVVVVMLSI), 35 to 55 (FVNATLAVVGLNLALFSLYFV), 75 to 95 (FYTGLVILASLATCTFAYPWL), 105 to 125 (FYLLVLIAALGGVVLASASHL), 127 to 147 (SLFIGIELISLPLFGLVGYAF), 159 to 179 (YTILSAAASSFLLFGMALVYA), 203 to 223 (LLAGLGLMIVGFGFKLSLVPF), 235 to 255 (PAPVSTFLATASKIAIFGVLM), 271 to 291 (TVLGIIAVASMLFGNLMAISQ), 297 to 317 (LLGYSSIAHLGYLLVALIAVQ), 326 to 346 (VGVYLAGYLFSSLGAFGVVSL), 373 to 393 (AAVMTVMMLSLAGIPMTLGFI), 408 to 427 (WWLTGAVVLGSAIGLYYYLR), and 449 to 469 (AFTAGGVVVLISAILVLVLGI).

Belongs to the complex I subunit 2 family. NDH-1 is composed of 13 different subunits. Subunits NuoA, H, J, K, L, M, N constitute the membrane sector of the complex.

The protein localises to the cell inner membrane. The enzyme catalyses a quinone + NADH + 5 H(+)(in) = a quinol + NAD(+) + 4 H(+)(out). In terms of biological role, NDH-1 shuttles electrons from NADH, via FMN and iron-sulfur (Fe-S) centers, to quinones in the respiratory chain. The immediate electron acceptor for the enzyme in this species is believed to be ubiquinone. Couples the redox reaction to proton translocation (for every two electrons transferred, four hydrogen ions are translocated across the cytoplasmic membrane), and thus conserves the redox energy in a proton gradient. The sequence is that of NADH-quinone oxidoreductase subunit N from Erwinia tasmaniensis (strain DSM 17950 / CFBP 7177 / CIP 109463 / NCPPB 4357 / Et1/99).